The chain runs to 312 residues: Carbonic anhydrase 4 (312 aa).

The signal sequence occupies residues 1–18; the sequence is MRLLLALLVLAAAPPQAR. Residues 21–285 form the Alpha-carbonic anhydrase domain; the sequence is SHWCYQIQVK…LGQRQVFRSG (265 aa). Disulfide bonds link C24/C36 and C46/C229. N33 carries N-linked (GlcNAc...) asparagine glycosylation. Residue H88 is the Proton donor/acceptor of the active site. H115, H117, and H140 together coordinate Zn(2+). N-linked (GlcNAc...) asparagine glycosylation is found at N152 and N195. A substrate-binding site is contributed by 225–226; the sequence is TT. N265 carries N-linked (GlcNAc...) asparagine glycosylation. S284 is lipidated: GPI-anchor amidated serine. A propeptide spans 285–312 (removed in mature form); sequence GAPGLLLAQPLPTLLAPVLACLTVGFLR.

Belongs to the alpha-carbonic anhydrase family. In terms of assembly, interacts with SLC4A4. Requires Zn(2+) as cofactor.

It localises to the cell membrane. It carries out the reaction hydrogencarbonate + H(+) = CO2 + H2O. Inhibited by acetazolamide. In terms of biological role, catalyzes the reversible hydration of carbon dioxide into bicarbonate and protons and thus is essential to maintaining intracellular and extracellular pH. May stimulate the sodium/bicarbonate transporter activity of SLC4A4 that acts in pH homeostasis. It is essential for acid overload removal from the retina and retina epithelium, and acid release in the choriocapillaris in the choroid. This chain is Carbonic anhydrase 4 (CA4), found in Bos taurus (Bovine).